Reading from the N-terminus, the 282-residue chain is Bis(5'-nucleosyl)-tetraphosphatase, symmetrical (282 aa).

The protein belongs to the Ap4A hydrolase family.

It catalyses the reaction P(1),P(4)-bis(5'-adenosyl) tetraphosphate + H2O = 2 ADP + 2 H(+). Its function is as follows. Hydrolyzes diadenosine 5',5'''-P1,P4-tetraphosphate to yield ADP. In Burkholderia pseudomallei (strain 1106a), this protein is Bis(5'-nucleosyl)-tetraphosphatase, symmetrical.